Reading from the N-terminus, the 284-residue chain is Nucleotide-binding protein NMA0948 (284 aa).

8-15 is an ATP binding site; the sequence is GLSGSGKS. 58 to 61 is a binding site for GTP; the sequence is DVRS.

Belongs to the RapZ-like family.

Its function is as follows. Displays ATPase and GTPase activities. The protein is Nucleotide-binding protein NMA0948 of Neisseria meningitidis serogroup A / serotype 4A (strain DSM 15465 / Z2491).